A 382-amino-acid polypeptide reads, in one-letter code: Mannitol-1-phosphate 5-dehydrogenase (382 aa).

3–14 serves as a coordination point for NAD(+); sequence ALHFGAGNIGRG. Position 269 is an N6-acetyllysine (lysine 269).

This sequence belongs to the mannitol dehydrogenase family. Monomer.

The catalysed reaction is D-mannitol 1-phosphate + NAD(+) = beta-D-fructose 6-phosphate + NADH + H(+). This is Mannitol-1-phosphate 5-dehydrogenase from Escherichia coli O157:H7.